A 175-amino-acid polypeptide reads, in one-letter code: NADH-ubiquinone oxidoreductase chain 6 (175 aa).

6 helical membrane-spanning segments follow: residues 1-21, 25-45, 47-67, 87-107, 116-136, and 149-169; these read MMAY…VGFS, SPIY…GIVM, FGGS…MLVV, AAVL…VLYV, VFNF…FGVF, and YGVW…LVIL.

The protein belongs to the complex I subunit 6 family. In terms of assembly, core subunit of respiratory chain NADH dehydrogenase (Complex I) which is composed of 45 different subunits.

The protein localises to the mitochondrion inner membrane. The catalysed reaction is a ubiquinone + NADH + 5 H(+)(in) = a ubiquinol + NAD(+) + 4 H(+)(out). Functionally, core subunit of the mitochondrial membrane respiratory chain NADH dehydrogenase (Complex I) which catalyzes electron transfer from NADH through the respiratory chain, using ubiquinone as an electron acceptor. Essential for the catalytic activity and assembly of complex I. This chain is NADH-ubiquinone oxidoreductase chain 6 (MT-ND6), found in Ceratotherium simum (White rhinoceros).